Consider the following 780-residue polypeptide: E3 SUMO-protein ligase gei-17 (780 aa).

The tract at residues 181 to 210 (APLHSSFPNHGRSSQQSLQKSEKSNRPKKM) is disordered. The PINIT domain maps to 203–367 (KSNRPKKMYA…AAGVYFVHRV (165 aa)). Residues 400–485 (GEDDIAMDRL…LAKVDKNTTE (86 aa)) form an SP-RING-type zinc finger. The Zn(2+) site is built by C431, H433, C454, and C457. Positions 519 to 530 (GTASCSSTNGNG) are enriched in polar residues. Disordered stretches follow at residues 519 to 544 (GTAS…ADDD), 560 to 594 (IMNS…KTKD), and 732 to 755 (QQHH…SFYA). The segment covering 732-749 (QQHHLQQQQQQQQSPQIM) has biased composition (low complexity).

This sequence belongs to the PIAS family. As to quaternary structure, may interact with gex-3.

Its pathway is protein modification; protein sumoylation. Its function is as follows. Functions as an E3-type smo-1 ligase. Mediates smo-1 conjugation to air-2 in vitro and is required for proper chromosome alignment. In the early embryo, specifically suppresses checkpoint activation in response to DNA damage, maybe by promoting mus-101 sumoylation. In embryos, plays a role in determining telomere localization in the nucleus. Acts with pie-1 to promote piRNA-mediated silencing and fertility in the adult germline. The sequence is that of E3 SUMO-protein ligase gei-17 from Caenorhabditis elegans.